A 626-amino-acid chain; its full sequence is Chaperone protein DnaK (626 aa).

Threonine 197 bears the Phosphothreonine; by autocatalysis mark. Low complexity predominate over residues 595 to 614 (QNMAQQQQAQGGAQQQNQNK). Residues 595 to 626 (QNMAQQQQAQGGAQQQNQNKGGDDDVIDAEVE) form a disordered region.

The protein belongs to the heat shock protein 70 family.

Acts as a chaperone. In Nautilia profundicola (strain ATCC BAA-1463 / DSM 18972 / AmH), this protein is Chaperone protein DnaK.